A 1728-amino-acid chain; its full sequence is Lysophospholipase NTE1 (1728 aa).

Topologically, residues 1–44 (MDSSSIAHESDIVSTERNILPERFISNKQQGNYLEDGSGDGNGK) are cytoplasmic. A helical transmembrane segment spans residues 45–65 (AAEHWLLAAIFNFFWVISYFI). Over 66–97 (SGSTHIAFRSSWYIVSLLLLKFPKWIIVEANH) the chain is Lumenal. Residues 98 to 118 (IHLTIPFSVLVVTLAIIFYVS) traverse the membrane as a helical segment. The Cytoplasmic segment spans residues 119-1728 (YEFLKGRLLS…GFFLHRRNSI (1610 aa)). Positions 141-150 (SLNSKNSKSS) are enriched in low complexity. Disordered regions lie at residues 141–167 (SLNS…RRRR), 285–368 (RKKK…DEST), 406–436 (NDNV…LSTS), 454–488 (TEAS…VTTP), 596–660 (NLQK…TGSR), and 687–756 (ASPS…FTSF). A compositionally biased stretch (basic and acidic residues) spans 153 to 162 (LHHDSKDSNT). Composition is skewed to polar residues over residues 293 to 303 (SRHGQYNNNSD) and 326 to 336 (MRSSSRNQNIP). A compositionally biased stretch (acidic residues) spans 345-367 (SSDEESDINDGDSESQSESDDES). Composition is skewed to polar residues over residues 406–424 (NDNV…NYTN), 454–479 (TEAS…SKSI), and 599–609 (KGFQSPTSSRL). The segment covering 610–628 (TSNFNGNSNNQRTNSRNSQ) has biased composition (low complexity). Polar residues-rich tracts occupy residues 642–657 (ELSQ…TPIT) and 729–756 (IYNN…FTSF). A nucleoside 3',5'-cyclic phosphate is bound by residues 854–987 (SPTL…LTSL) and 983–1121 (SLTS…VAKK). Residues 1034–1055 (PELEENSTDYPNDGEEKDSSRD) form a disordered region. A compositionally biased stretch (acidic residues) spans 1036–1049 (LEENSTDYPNDGEE). In terms of domain architecture, PNPLA spans 1422 to 1586 (LVLGGGGARG…VDNLPVLEMK (165 aa)). Residues 1426-1431 (GGGARG) carry the GXGXXG motif. A GXSXG motif is present at residues 1453 to 1457 (GTSIG). The Nucleophile role is filled by Ser-1455. Asp-1573 functions as the Proton acceptor in the catalytic mechanism. The DGA/G motif lies at 1573-1575 (DGG).

It belongs to the NTE family.

The protein localises to the endoplasmic reticulum membrane. The catalysed reaction is a 1-acyl-sn-glycero-3-phosphocholine + H2O = sn-glycerol 3-phosphocholine + a fatty acid + H(+). Its activity is regulated as follows. Inhibited by organophosphorus esters. In terms of biological role, intracellular phospholipase B that catalyzes the double deacylation of phosphatidylcholine (PC) to glycerophosphocholine (GroPCho). Plays an important role in membrane lipid homeostasis. Responsible for the rapid PC turnover in response to inositol, elevated temperatures, or when choline is present in the growth medium. The chain is Lysophospholipase NTE1 (NTE1) from Candida glabrata (strain ATCC 2001 / BCRC 20586 / JCM 3761 / NBRC 0622 / NRRL Y-65 / CBS 138) (Yeast).